Here is a 161-residue protein sequence, read N- to C-terminus: Large-conductance mechanosensitive channel (161 aa).

A run of 2 helical transmembrane segments spans residues 21-41 (VGVI…DGVI) and 79-99 (GAFI…FLLV). The span at 142 to 154 (TAAPKAAAAPVAK) shows a compositional bias: low complexity. Positions 142–161 (TAAPKAAAAPVAKPKTKPKA) are disordered.

It belongs to the MscL family. As to quaternary structure, homopentamer.

The protein localises to the cell inner membrane. Its function is as follows. Channel that opens in response to stretch forces in the membrane lipid bilayer. May participate in the regulation of osmotic pressure changes within the cell. The chain is Large-conductance mechanosensitive channel from Caulobacter sp. (strain K31).